We begin with the raw amino-acid sequence, 394 residues long: MTLFTVSCLLVVLFLCHSLVHAENNGYYGYTPTVANYLPEKPQNIMNPVDSCWRLKSDWAANRKDLADCVVGFGSSTLGGKKGNLYVVTNPYDNAQNPQPGSLRYGVIQAKPLWITFAKDMVITLENELMVNSYKTIDGRGAKVEIAYGPCITIQDVTNVIVHGISIHDCKPGKYGMVRSSPTHVGHRKGSDGDAIAIFGSSNIWIDHCYLASCTDGLIDVIHASTGITISNNYFTQHDKVMLLGHNDDFVQDVKMKVTVAFNHFGPGLVERMPRVRRGYAHVANNRYDKWIMYAIGGSADPTIFSEGNYFIASDKSNSKEVTKREVKGGWNNWRWRTSKDVFKNGAYFVPSGYGSISLPYSSAQRFTVAPGNLVPSLTADAGPLNCNRNGPCY.

Residues 1–22 form the signal peptide; the sequence is MTLFTVSCLLVVLFLCHSLVHA. Ca(2+) contacts are provided by D192, D216, and D220. R272 is a catalytic residue.

The protein belongs to the polysaccharide lyase 1 family. Ca(2+) is required as a cofactor.

The enzyme catalyses Eliminative cleavage of (1-&gt;4)-alpha-D-galacturonan to give oligosaccharides with 4-deoxy-alpha-D-galact-4-enuronosyl groups at their non-reducing ends.. Its pathway is glycan metabolism; pectin degradation; 2-dehydro-3-deoxy-D-gluconate from pectin: step 2/5. This is Probable pectate lyase 16 from Arabidopsis thaliana (Mouse-ear cress).